The sequence spans 101 residues: Aspartyl/glutamyl-tRNA(Asn/Gln) amidotransferase subunit C (101 aa).

Belongs to the GatC family. Heterotrimer of A, B and C subunits.

It carries out the reaction L-glutamyl-tRNA(Gln) + L-glutamine + ATP + H2O = L-glutaminyl-tRNA(Gln) + L-glutamate + ADP + phosphate + H(+). It catalyses the reaction L-aspartyl-tRNA(Asn) + L-glutamine + ATP + H2O = L-asparaginyl-tRNA(Asn) + L-glutamate + ADP + phosphate + 2 H(+). Functionally, allows the formation of correctly charged Asn-tRNA(Asn) or Gln-tRNA(Gln) through the transamidation of misacylated Asp-tRNA(Asn) or Glu-tRNA(Gln) in organisms which lack either or both of asparaginyl-tRNA or glutaminyl-tRNA synthetases. The reaction takes place in the presence of glutamine and ATP through an activated phospho-Asp-tRNA(Asn) or phospho-Glu-tRNA(Gln). In Enterococcus faecalis (strain ATCC 700802 / V583), this protein is Aspartyl/glutamyl-tRNA(Asn/Gln) amidotransferase subunit C.